A 207-amino-acid chain; its full sequence is Outer-membrane lipoprotein carrier protein (207 aa).

The N-terminal stretch at 1–21 (MRAIRMLLVSALALGTVTAYA) is a signal peptide.

The protein belongs to the LolA family. As to quaternary structure, monomer.

The protein localises to the periplasm. Functionally, participates in the translocation of lipoproteins from the inner membrane to the outer membrane. Only forms a complex with a lipoprotein if the residue after the N-terminal Cys is not an aspartate (The Asp acts as a targeting signal to indicate that the lipoprotein should stay in the inner membrane). In Pseudomonas putida (strain GB-1), this protein is Outer-membrane lipoprotein carrier protein.